The primary structure comprises 1168 residues: Protein VARIATION IN COMPOUND TRIGGERED ROOT growth response (1168 aa).

One can recognise a TIR domain in the interval W10 to L171. The active site involves E85. The region spanning E187–R452 is the NB-ARC domain. LRR repeat units lie at residues T539–D562, L606–F629, C631–T653, L676–L699, S701–A720, T721–N744, L795–S820, S839–L865, C873–N896, and N1065–S1089.

The protein belongs to the disease resistance NB-LRR family. In terms of assembly, part of a nuclear protein complex made of VICTR, PAD4 and EDS1. Interacts (via TIR domain) with PAD4 and EDS1.

It localises to the cytoplasm. The protein localises to the nucleus. It carries out the reaction NAD(+) + H2O = ADP-D-ribose + nicotinamide + H(+). Disease resistance protein of the TIR-NB-LRR-type. Part of the RPS6 locus that contains a cluster of several paralogous disease resistance (R) genes. Resistance proteins guard the plant against pathogens that contain an appropriate avirulence protein via an indirect interaction with this avirulence protein. That triggers a defense system including the hypersensitive response, which restricts the pathogen growth. Required for [5-(3,4-dichlorophenyl)furan-2-yl]-piperidine-1-ylmethanethione-(DFPM-) induced root growth arrest due to reduced number of meristem cells in the division zone of the primary root and inhibition of abscisic acid- (ABA-) induced stomatal closing. This Arabidopsis thaliana (Mouse-ear cress) protein is Protein VARIATION IN COMPOUND TRIGGERED ROOT growth response (VICTR).